Reading from the N-terminus, the 517-residue chain is Ammonium transporter 3 (517 aa).

Residues 1–32 are Extracellular-facing; it reads MLNEPNALLRRDANSTIATVTELFPNEYSNAD. Residues 33–53 form a helical membrane-spanning segment; it reads IAYVLLSTVVVFTVTPGIALY. Topologically, residues 54-69 are cytoplasmic; sequence YAGMVRKNSALSILTQ. The helical transmembrane segment at 70 to 90 threads the bilayer; that stretch reads SFLVTAVVFIQWYLFGYSLAC. Residues 91–118 are Extracellular-facing; the sequence is SSGSSFYGTLWQGGMNHLWLEPYIPGST. A helical membrane pass occupies residues 119–139; the sequence is IPAIVYFPFGGLFAVATAQLF. Over 140-148 the chain is Cytoplasmic; that stretch reads AGAMAERGR. A helical membrane pass occupies residues 149–169; that stretch reads LIPSLVISFLYITLVYCPQAY. The Extracellular segment spans residues 170 to 180; it reads WTWAPNGWLYT. Residues 181–201 traverse the membrane as a helical segment; that stretch reads LGALDFAGGGPVHISSGFAAL. The Cytoplasmic portion of the chain corresponds to 202-272; the sequence is AYSLCLGRRI…AHNPPHDAGM (71 aa). The helical transmembrane segment at 273 to 293 threads the bilayer; sequence VYIGVVLIWFAWLCFNSGTLL. Topologically, residues 294 to 299 are extracellular; that stretch reads TVNIRT. A helical membrane pass occupies residues 300 to 320; the sequence is AYIMTNTLISSSFGALTWAII. At 321–327 the chain is on the cytoplasmic side; sequence DYIRYRK. Residues 328–348 traverse the membrane as a helical segment; sequence FSTIGICEGAIAGLVGITPAC. Position 349 (Gly349) is a topological domain, extracellular. The helical transmembrane segment at 350–370 threads the bilayer; it reads FVFPWGAAAGGIVPALVCNFL. At 371–384 the chain is on the cytoplasmic side; that stretch reads HDLNEWIGVDETLR. Residues 385-405 form a helical membrane-spanning segment; sequence VFNLHGIGGIVGSIVLGVVAH. Topologically, residues 406 to 432 are extracellular; sequence PDVAASDGATVIDGGWAVHHWKQMGYQ. The helical transmembrane segment at 433–453 threads the bilayer; the sequence is FAGFTSVAAWSFVITAIICLL. The Cytoplasmic segment spans residues 454 to 517; it reads VDLVPGLHIR…NIKQEKQDEF (64 aa).

This sequence belongs to the ammonia transporter channel (TC 1.A.11.2) family.

It is found in the membrane. In terms of biological role, transporter for ammonium to use as a nitrogen source. In Schizosaccharomyces pombe (strain 972 / ATCC 24843) (Fission yeast), this protein is Ammonium transporter 3 (amt3).